Consider the following 148-residue polypeptide: Stathmin (148 aa).

Positions 4–145 (SDIQVKELEK…NKEGKDPGEA (142 aa)) constitute an SLD domain. Residue S16 is modified to Phosphoserine; by PKA. At S38 the chain carries Phosphoserine; by CDK1. The stretch at 41-140 (KKKDLSLEEI…EEVRKNKEGK (100 aa)) forms a coiled coil. S63 carries the post-translational modification Phosphoserine; by PKA. Positions 122–148 (RLREKDKHIEEVRKNKEGKDPGEAETN) are disordered.

The protein belongs to the stathmin family. In terms of assembly, binds to two alpha/beta-tubulin heterodimers. Many different phosphorylated forms are observed depending on specific combinations among the sites which can be phosphorylated. MAPK is responsible for the phosphorylation of stathmin in response to NGF.

Its subcellular location is the cytoplasm. The protein localises to the cytoskeleton. In terms of biological role, involved in the regulation of the microtubule (MT) filament system by destabilizing microtubules. It prevents assembly and promotes disassembly of microtubules. The chain is Stathmin (STMN1) from Gallus gallus (Chicken).